The chain runs to 445 residues: 6-phosphogluconate dehydrogenase, decarboxylating (445 aa).

NADP(+)-binding positions include Ala-1–Gly-4, Asn-22–Ser-24, Val-63–Ala-65, and Asn-91. Substrate contacts are provided by residues Asn-91 and Ser-117–Gly-119. Catalysis depends on Lys-172, which acts as the Proton acceptor. His-175 to Asn-176 contacts substrate. The active-site Proton donor is the Glu-179. Tyr-180, Lys-249, Arg-276, Arg-434, and His-440 together coordinate substrate.

This sequence belongs to the 6-phosphogluconate dehydrogenase family. In terms of assembly, homodimer.

The enzyme catalyses 6-phospho-D-gluconate + NADP(+) = D-ribulose 5-phosphate + CO2 + NADPH. The protein operates within carbohydrate degradation; pentose phosphate pathway; D-ribulose 5-phosphate from D-glucose 6-phosphate (oxidative stage): step 3/3. In terms of biological role, catalyzes the oxidative decarboxylation of 6-phosphogluconate to ribulose 5-phosphate and CO(2), with concomitant reduction of NADP to NADPH. This is 6-phosphogluconate dehydrogenase, decarboxylating (gnd) from Shigella sonnei.